A 101-amino-acid chain; its full sequence is Ubiquitin-related modifier 1 homolog 1 (101 aa).

Gly-101 bears the 1-thioglycine mark. Gly-101 is covalently cross-linked (Glycyl lysine isopeptide (Gly-Lys) (interchain with K-? in acceptor proteins)).

It belongs to the URM1 family. Post-translationally, C-terminal thiocarboxylation occurs in 2 steps, it is first acyl-adenylated (-COAMP) via the hesA/moeB/thiF part of the MOCS3 homolog, then thiocarboxylated (-COSH) via the rhodanese domain of the MOCS3 homolog.

The protein resides in the cytoplasm. It participates in tRNA modification; 5-methoxycarbonylmethyl-2-thiouridine-tRNA biosynthesis. In terms of biological role, acts as a sulfur carrier required for 2-thiolation of mcm(5)S(2)U at tRNA wobble positions of cytosolic tRNA(Lys), tRNA(Glu) and tRNA(Gln). Serves as sulfur donor in tRNA 2-thiolation reaction by being thiocarboxylated (-COSH) at its C-terminus by MOCS3. The sulfur is then transferred to tRNA to form 2-thiolation of mcm(5)S(2)U. Also acts as a ubiquitin-like protein (UBL) that is covalently conjugated via an isopeptide bond to lysine residues of target proteins. The thiocarboxylated form serves as substrate for conjugation and oxidative stress specifically induces the formation of UBL-protein conjugates. In Arabidopsis thaliana (Mouse-ear cress), this protein is Ubiquitin-related modifier 1 homolog 1.